The sequence spans 456 residues: RUN domain-containing protein 3B (456 aa).

Residues 1–26 (MASRSLGGLSGIRGGGGGGGKKSLSS) form a disordered region. Positions 8–21 (GLSGIRGGGGGGGK) are enriched in gly residues. R13 is modified (omega-N-methylarginine). Residues 57–189 (DDSSPEFNNF…IDFSFCLKGE (133 aa)) enclose the RUN domain. A phosphoserine mark is found at S215 and S216. Residues 300 to 325 (AHKLEKEQLEYIIVELQDQLTVLKNN) adopt a coiled-coil conformation. Residues 382–405 (SLSQTSLDPGQSQEGDGKQDTLNI) are disordered.

Belongs to the RUNDC3 family. Interacts with RAP2A.

The sequence is that of RUN domain-containing protein 3B (RUNDC3B) from Macaca fascicularis (Crab-eating macaque).